The chain runs to 285 residues: Probable endonuclease 4 (285 aa).

Zn(2+)-binding residues include H69, H109, E145, D179, H182, H216, D229, H231, and E261.

Belongs to the AP endonuclease 2 family. Requires Zn(2+) as cofactor.

It carries out the reaction Endonucleolytic cleavage to 5'-phosphooligonucleotide end-products.. Functionally, endonuclease IV plays a role in DNA repair. It cleaves phosphodiester bonds at apurinic or apyrimidinic (AP) sites, generating a 3'-hydroxyl group and a 5'-terminal sugar phosphate. This chain is Probable endonuclease 4, found in Yersinia pseudotuberculosis serotype O:1b (strain IP 31758).